The following is a 178-amino-acid chain: FMN reductase (NADH) RutF (178 aa).

This sequence belongs to the non-flavoprotein flavin reductase family. RutF subfamily.

It catalyses the reaction FMNH2 + NAD(+) = FMN + NADH + 2 H(+). In terms of biological role, catalyzes the reduction of FMN to FMNH2 which is used to reduce pyrimidine by RutA via the Rut pathway. In Pseudomonas syringae pv. syringae (strain B728a), this protein is FMN reductase (NADH) RutF.